The sequence spans 299 residues: Taste receptor type 2 member 50 (299 aa).

Residue M1 is a topological domain, extracellular. The helical transmembrane segment at 2-22 threads the bilayer; that stretch reads ITFLYIFFSILILVLFVLGNF. Residues 23–55 are Cytoplasmic-facing; sequence ANGFIALVNFIDWVKRKKISSADQILTALAVSR. Residues 56 to 76 traverse the membrane as a helical segment; sequence IGLLWALLLNWYLTVLNPAFY. At 77–87 the chain is on the extracellular side; the sequence is SVELRITSYNA. The helical transmembrane segment at 88 to 108 threads the bilayer; sequence WVVTNHFSMWLAASLSIFYLL. Topologically, residues 109 to 126 are cytoplasmic; that stretch reads KIANFSNLIFLHLKRRVR. A helical transmembrane segment spans residues 127–147; it reads SVILVILLGTLIFLVCHLLVA. Residues 148–181 are Extracellular-facing; the sequence is NMDESMWAEEYEGNMTGKMKLRNTVHLSYLTVTT. Residue N161 is glycosylated (N-linked (GlcNAc...) asparagine). A helical membrane pass occupies residues 182–202; sequence LWSFIPFTLSLISFLMLICSL. The Cytoplasmic segment spans residues 203–229; sequence CKHLKKMQLHGEGSQDLSTKVHIKALQ. A helical membrane pass occupies residues 230 to 250; that stretch reads TLISFLLLCAIFFLFLIISVW. Residues 251 to 259 are Extracellular-facing; the sequence is SPRRLQNDP. A helical transmembrane segment spans residues 260–280; the sequence is VVMVSKAVGNIYLAFDSFILI. The Cytoplasmic segment spans residues 281–299; sequence WRTKKLKHTFLLILCQIRC.

Belongs to the G-protein coupled receptor T2R family.

It is found in the membrane. Receptor that may play a role in the perception of bitterness and is gustducin-linked. May play a role in sensing the chemical composition of the gastrointestinal content. The activity of this receptor may stimulate alpha gustducin, mediate PLC-beta-2 activation and lead to the gating of TRPM5. The chain is Taste receptor type 2 member 50 (TAS2R50) from Gorilla gorilla gorilla (Western lowland gorilla).